We begin with the raw amino-acid sequence, 36 residues long: Termicin (36 aa).

Disulfide bonds link Cys-2–Cys-24, Cys-7–Cys-29, and Cys-11–Cys-31. Gly-36 is modified (glycine amide).

Expressed in salivary glands and hemocytes.

It localises to the secreted. Functionally, weak activity against Gram-positive bacteria B.megaterium, S.pyogenes and M.luteus, strong activity against yeasts C.albicans, C.neoformans and S.cerevisiae and filamentous fungi F.oxysporum, F.culmorum, N.crassa and N.hematococca. Less active against filamentous fungus T.viride. Inactive against Gram-positive bacteria A.viridans and S.aureus, filamentous fungi A.fumigatus and B.bassiana and yeast C.glabrata. The polypeptide is Termicin (Pseudacanthotermes spiniger).